We begin with the raw amino-acid sequence, 272 residues long: 3-methyl-2-oxobutanoate hydroxymethyltransferase (272 aa).

Mg(2+) is bound by residues aspartate 51 and aspartate 90. Residues aspartate 51–serine 52, aspartate 90, and lysine 119 contribute to the 3-methyl-2-oxobutanoate site. Glutamate 121 provides a ligand contact to Mg(2+). Glutamate 188 (proton acceptor) is an active-site residue.

The protein belongs to the PanB family. Homodecamer; pentamer of dimers. The cofactor is Mg(2+).

The protein resides in the cytoplasm. The enzyme catalyses 3-methyl-2-oxobutanoate + (6R)-5,10-methylene-5,6,7,8-tetrahydrofolate + H2O = 2-dehydropantoate + (6S)-5,6,7,8-tetrahydrofolate. It functions in the pathway cofactor biosynthesis; (R)-pantothenate biosynthesis; (R)-pantoate from 3-methyl-2-oxobutanoate: step 1/2. Its function is as follows. Catalyzes the reversible reaction in which hydroxymethyl group from 5,10-methylenetetrahydrofolate is transferred onto alpha-ketoisovalerate to form ketopantoate. This chain is 3-methyl-2-oxobutanoate hydroxymethyltransferase, found in Dechloromonas aromatica (strain RCB).